Reading from the N-terminus, the 337-residue chain is Histidine N-acetyltransferase (337 aa).

The propeptide at 1–2 (MK) is removed in mature form. The N-acetyltransferase domain occupies 21–156 (LQFAVATEED…QGILLVRFRA (136 aa)).

The enzyme catalyses L-histidine + acetyl-CoA = N(alpha)-acetyl-L-histidine + CoA + H(+). In terms of biological role, enzyme responsible for the N-acetyl-histidine (NAH) synthesis, which is a major constituent of brain and lens of ectothermic vertebrates. This Scomber australasicus (Blue mackerel) protein is Histidine N-acetyltransferase (hisat).